The primary structure comprises 387 residues: 1-deoxy-D-xylulose 5-phosphate reductoisomerase (387 aa).

NADPH contacts are provided by T10, G11, S12, V13, N38, and N119. Residue K120 participates in 1-deoxy-D-xylulose 5-phosphate binding. E121 provides a ligand contact to NADPH. D145 contacts Mn(2+). Residues S146, E147, S170, and H193 each coordinate 1-deoxy-D-xylulose 5-phosphate. A Mn(2+)-binding site is contributed by E147. G199 contributes to the NADPH binding site. 1-deoxy-D-xylulose 5-phosphate-binding residues include S206, N211, K212, and E215. E215 is a Mn(2+) binding site.

This sequence belongs to the DXR family. Mg(2+) serves as cofactor. Requires Mn(2+) as cofactor.

The enzyme catalyses 2-C-methyl-D-erythritol 4-phosphate + NADP(+) = 1-deoxy-D-xylulose 5-phosphate + NADPH + H(+). The protein operates within isoprenoid biosynthesis; isopentenyl diphosphate biosynthesis via DXP pathway; isopentenyl diphosphate from 1-deoxy-D-xylulose 5-phosphate: step 1/6. Catalyzes the NADPH-dependent rearrangement and reduction of 1-deoxy-D-xylulose-5-phosphate (DXP) to 2-C-methyl-D-erythritol 4-phosphate (MEP). This is 1-deoxy-D-xylulose 5-phosphate reductoisomerase from Wolbachia pipientis wMel.